A 283-amino-acid chain; its full sequence is Pantothenate synthetase (283 aa).

30 to 37 (MGNLHSGH) serves as a coordination point for ATP. His-37 acts as the Proton donor in catalysis. Gln-61 is a (R)-pantoate binding site. Gln-61 serves as a coordination point for beta-alanine. 149-152 (GQKD) lines the ATP pocket. Residue Gln-155 participates in (R)-pantoate binding. ATP contacts are provided by residues Val-178 and 186-189 (LSSR).

The protein belongs to the pantothenate synthetase family. Homodimer.

The protein localises to the cytoplasm. The enzyme catalyses (R)-pantoate + beta-alanine + ATP = (R)-pantothenate + AMP + diphosphate + H(+). It functions in the pathway cofactor biosynthesis; (R)-pantothenate biosynthesis; (R)-pantothenate from (R)-pantoate and beta-alanine: step 1/1. Catalyzes the condensation of pantoate with beta-alanine in an ATP-dependent reaction via a pantoyl-adenylate intermediate. The protein is Pantothenate synthetase of Pseudomonas fluorescens (strain SBW25).